We begin with the raw amino-acid sequence, 323 residues long: Fructose-1,6-bisphosphatase class 1 (323 aa).

Residues Glu-93, Asp-114, Leu-116, and Asp-117 each coordinate Mg(2+). Substrate-binding positions include 117–120, Asn-205, Tyr-233, and Lys-263; that span reads DGSS. Glu-269 provides a ligand contact to Mg(2+).

It belongs to the FBPase class 1 family. In terms of assembly, homotetramer. Mg(2+) is required as a cofactor.

The protein localises to the cytoplasm. The catalysed reaction is beta-D-fructose 1,6-bisphosphate + H2O = beta-D-fructose 6-phosphate + phosphate. It participates in carbohydrate biosynthesis; gluconeogenesis. The protein is Fructose-1,6-bisphosphatase class 1 of Sulfurihydrogenibium sp. (strain YO3AOP1).